Consider the following 643-residue polypeptide: Sodium/iodide cotransporter (643 aa).

Residues 1 to 14 (MEAVETGERPTFGA) are Extracellular-facing. The chain crosses the membrane as a helical span at residues 15 to 31 (WDYGVFALMLLVSTGIG). Residues 32–56 (LWVGLARGGQRSAEDFFTGGRRLAA) are Cytoplasmic-facing. The discontinuously helical transmembrane segment at 57–80 (LPVGLSLSASFMSAVQVLGVPSEA) threads the bilayer. Ser-69, Val-71, and Gln-72 together coordinate Na(+). Position 76 (Val-76) interacts with iodide. Residues 81–84 (YRYG) are Extracellular-facing. The helical transmembrane segment at 85–105 (LKFLWMCLGQLLNSVLTALLF) threads the bilayer. Residue Met-90 participates in iodide binding. The Cytoplasmic segment spans residues 106–130 (MPVFYRLGLTSTYEYLEMRFSRAVR). Residues 131–157 (LCGTLQYIVATMLYTGIVIYAPALILN) form a helical membrane-spanning segment. Tyr-144 provides a ligand contact to Na(+). Residues 158-163 (QVTGLD) are Extracellular-facing. A helical membrane pass occupies residues 164-181 (IWASLLSTGIICTFYTAV). Residues 182–189 (GGMKAVVW) lie on the Cytoplasmic side of the membrane. The helical transmembrane segment at 190–208 (TDVFQVVVMLSGFWVVLAR) threads the bilayer. The Extracellular segment spans residues 209-243 (GVMLVGGPRQVLTLAQNHSRINLMDFNPDPRSRYT). The chain crosses the membrane as a discontinuously helical span at residues 244–266 (FWTFVVGGTLVWLSMYGVNQAQV). Residue Trp-255 participates in iodide binding. Met-258 provides a ligand contact to Na(+). Residues 267–278 (QRYVACRTEKQA) are Cytoplasmic-facing. Residues 279 to 301 (KLALLINQVGLFLIVSSAACCGI) traverse the membrane as a helical segment. The Extracellular segment spans residues 302-335 (VMFVFYTDCDPLLLGRISAPDQYMPLLVLDIFED). The helical transmembrane segment at 336-363 (LPGVPGLFLACAYSGTLSTASTSINAMA) threads the bilayer. Residues 364–386 (AVTVEDLIKPRLRSLAPRKLVII) are Cytoplasmic-facing. Residues 387–408 (SKGLSLIYGSACLTVAALSSLL) form a helical membrane-spanning segment. The Extracellular segment spans residues 409-411 (GGG). The helical transmembrane segment at 412 to 437 (VLQGSFTVMGVISGPLLGAFILGMFL) threads the bilayer. Position 413 (Leu-413) interacts with iodide. Na(+) contacts are provided by Ser-416 and Phe-417. Phe-417 contributes to the iodide binding site. Over 438-441 (PACN) the chain is Cytoplasmic. A helical transmembrane segment spans residues 442–465 (TPGVLAGLGAGLALSLWVALGATL). Residues 466 to 525 (YPPSEQTMRVLPSSAARCVALSVNASGLLDPALLPANDSSRAPSSGMDASRPALADSFYA) lie on the Extracellular side of the membrane. Residues Asn-489 and Asn-502 are each glycosylated (N-linked (GlcNAc...) asparagine). A helical membrane pass occupies residues 526 to 550 (ISYLYYGALGTLTTVLCGALISCLT). Residues 551–643 (GPTKRSTLAP…GGRDQQETNL (93 aa)) lie on the Cytoplasmic side of the membrane. Ser-556 is subject to Phosphoserine; by PKA. Residues 623–643 (AGSWTPCVGHDGGRDQQETNL) are disordered. Residues 633-643 (DGGRDQQETNL) show a composition bias toward basic and acidic residues.

This sequence belongs to the sodium:solute symporter (SSF) (TC 2.A.21) family. In terms of assembly, monomer. Post-translationally, glycosylated. As to expression, expression is primarily in thyroid tissue, but also to a lower extent in mammary gland and ovary. Expression is reduced in tumors.

It is found in the cell membrane. It localises to the cytoplasm. The enzyme catalyses iodide(out) + 2 Na(+)(out) = iodide(in) + 2 Na(+)(in). The catalysed reaction is chlorate(out) + 2 Na(+)(out) = chlorate(in) + 2 Na(+)(in). It carries out the reaction thiocyanate(out) + 2 Na(+)(out) = thiocyanate(in) + 2 Na(+)(in). It catalyses the reaction nitrate(out) + 2 Na(+)(out) = nitrate(in) + 2 Na(+)(in). The enzyme catalyses selenocyanate(out) + 2 Na(+)(out) = selenocyanate(in) + 2 Na(+)(in). Its activity is regulated as follows. Dysidenin and perchlorate inhibit iodide transport activity. Oxyanions inhibit iodide transport activity by blocking the binding sites for iodide and one of the sodium ions. Functionally, sodium:iodide symporter that mediates the transport of iodide into the thyroid gland. Can also mediate the transport of chlorate, thiocynate, nitrate and selenocynate. The protein is Sodium/iodide cotransporter (SLC5A5) of Homo sapiens (Human).